Reading from the N-terminus, the 111-residue chain is MIDAIQSVGAFSNLKEAEGTSLTASTALSLPSAGASAPQSQSFAEVLGTMTTDAIRSMKSAEGVSLQAIRGEANTREVVDAVMNAEQSLQTALAIRDKVVTAYLEIARMQI.

Belongs to the FliE family.

It localises to the bacterial flagellum basal body. This chain is Flagellar hook-basal body complex protein FliE, found in Sinorhizobium fredii (strain NBRC 101917 / NGR234).